Reading from the N-terminus, the 108-residue chain is Small ribosomal subunit protein eS25A (108 aa).

A compositionally biased stretch (low complexity) spans 1 to 20; sequence MPPKQQLSKAAKAAAALAGG. The disordered stretch occupies residues 1-30; it reads MPPKQQLSKAAKAAAALAGGKKSKKKWSKK. N,N-dimethylproline; by NTM1 is present on P2. Over residues 21-30 the composition is skewed to basic residues; that stretch reads KKSKKKWSKK.

Belongs to the eukaryotic ribosomal protein eS25 family. In terms of assembly, component of the small ribosomal subunit (SSU). Mature yeast ribosomes consist of a small (40S) and a large (60S) subunit. The 40S small subunit contains 1 molecule of ribosomal RNA (18S rRNA) and 33 different proteins (encoded by 57 genes). The large 60S subunit contains 3 rRNA molecules (25S, 5.8S and 5S rRNA) and 46 different proteins (encoded by 81 genes).

It is found in the cytoplasm. Functionally, component of the ribosome, a large ribonucleoprotein complex responsible for the synthesis of proteins in the cell. The small ribosomal subunit (SSU) binds messenger RNAs (mRNAs) and translates the encoded message by selecting cognate aminoacyl-transfer RNA (tRNA) molecules. The large subunit (LSU) contains the ribosomal catalytic site termed the peptidyl transferase center (PTC), which catalyzes the formation of peptide bonds, thereby polymerizing the amino acids delivered by tRNAs into a polypeptide chain. The nascent polypeptides leave the ribosome through a tunnel in the LSU and interact with protein factors that function in enzymatic processing, targeting, and the membrane insertion of nascent chains at the exit of the ribosomal tunnel. This Saccharomyces cerevisiae (strain ATCC 204508 / S288c) (Baker's yeast) protein is Small ribosomal subunit protein eS25A.